Reading from the N-terminus, the 501-residue chain is ATP synthase subunit alpha, chloroplastic (501 aa).

Residue Gly-170 to Thr-177 participates in ATP binding.

This sequence belongs to the ATPase alpha/beta chains family. As to quaternary structure, F-type ATPases have 2 components, CF(1) - the catalytic core - and CF(0) - the membrane proton channel. CF(1) has five subunits: alpha(3), beta(3), gamma(1), delta(1), epsilon(1). CF(0) has four main subunits: a, b, b' and c.

The protein resides in the plastid. It is found in the chloroplast thylakoid membrane. The enzyme catalyses ATP + H2O + 4 H(+)(in) = ADP + phosphate + 5 H(+)(out). Produces ATP from ADP in the presence of a proton gradient across the membrane. The alpha chain is a regulatory subunit. The chain is ATP synthase subunit alpha, chloroplastic from Pisum sativum (Garden pea).